The sequence spans 481 residues: Glutamate--cysteine ligase (481 aa).

The protein belongs to the glutamate--cysteine ligase type 1 family. Type 1 subfamily.

The enzyme catalyses L-cysteine + L-glutamate + ATP = gamma-L-glutamyl-L-cysteine + ADP + phosphate + H(+). The protein operates within sulfur metabolism; glutathione biosynthesis; glutathione from L-cysteine and L-glutamate: step 1/2. This chain is Glutamate--cysteine ligase, found in Clostridium acetobutylicum (strain ATCC 824 / DSM 792 / JCM 1419 / IAM 19013 / LMG 5710 / NBRC 13948 / NRRL B-527 / VKM B-1787 / 2291 / W).